A 238-amino-acid polypeptide reads, in one-letter code: tRNA (guanine-N(7)-)-methyltransferase (238 aa).

The S-adenosyl-L-methionine site is built by Glu-68, Glu-93, Asp-120, and Asp-143. Asp-143 is a catalytic residue. Residues Lys-147, Asp-179, and 216 to 219 (TKFE) each bind substrate.

This sequence belongs to the class I-like SAM-binding methyltransferase superfamily. TrmB family.

The enzyme catalyses guanosine(46) in tRNA + S-adenosyl-L-methionine = N(7)-methylguanosine(46) in tRNA + S-adenosyl-L-homocysteine. The protein operates within tRNA modification; N(7)-methylguanine-tRNA biosynthesis. In terms of biological role, catalyzes the formation of N(7)-methylguanine at position 46 (m7G46) in tRNA. This Ectopseudomonas mendocina (strain ymp) (Pseudomonas mendocina) protein is tRNA (guanine-N(7)-)-methyltransferase.